We begin with the raw amino-acid sequence, 232 residues long: Rho-related GTP-binding protein Rho6 (232 aa).

Residues Q23–A28, Y38–T45, D67–S71, C125–D128, and A169–F170 contribute to the GTP site. The Effector region motif lies at Y42 to Y50. C229 is modified (cysteine methyl ester). C229 carries the S-geranylgeranyl cysteine lipid modification. Positions S230–M232 are cleaved as a propeptide — removed in mature form.

Belongs to the small GTPase superfamily. Rho family. Binds GRB7 and PLXNB1. Interacts with PLXNA2. Interacts with UBXD5.

It localises to the cell membrane. It is found in the cytoplasm. The protein resides in the cytoskeleton. In terms of biological role, lacks intrinsic GTPase activity. Has a low affinity for GDP, and constitutively binds GTP. Controls rearrangements of the actin cytoskeleton. Induces the Rac-dependent neuritic process formation in part by disruption of the cortical actin filaments. Causes the formation of many neuritic processes from the cell body with disruption of the cortical actin filaments. This chain is Rho-related GTP-binding protein Rho6 (Rnd1), found in Mus musculus (Mouse).